The chain runs to 276 residues: Hydroxyethylthiazole kinase (276 aa).

The substrate site is built by methionine 53 and alanine 202.

It belongs to the Thz kinase family. Mg(2+) serves as cofactor.

The enzyme catalyses 5-(2-hydroxyethyl)-4-methylthiazole + ATP = 4-methyl-5-(2-phosphooxyethyl)-thiazole + ADP + H(+). Its pathway is cofactor biosynthesis; thiamine diphosphate biosynthesis; 4-methyl-5-(2-phosphoethyl)-thiazole from 5-(2-hydroxyethyl)-4-methylthiazole: step 1/1. Thiazole kinase involved in thiamine salvage pathway. In Arabidopsis thaliana (Mouse-ear cress), this protein is Hydroxyethylthiazole kinase (THIM).